The chain runs to 323 residues: Transmembrane protein 59 (323 aa).

The signal sequence occupies residues M1–A35. At E36–S238 the chain is on the extracellular side. N90 carries N-linked (GlcNAc...) asparagine glycosylation. The chain crosses the membrane as a helical span at residues G239 to A259. Residues T260–I323 are Cytoplasmic-facing. The ATG16L1-binding motif motif lies at T263–E281. T303 is subject to Phosphothreonine.

The protein belongs to the TMEM59 family. Interacts with ATG16L1 (via WD repeats). In terms of processing, N-glycosylated.

The protein localises to the late endosome membrane. It localises to the lysosome membrane. The protein resides in the cell membrane. It is found in the golgi apparatus membrane. In terms of biological role, acts as a regulator of autophagy in response to S.aureus infection by promoting activation of LC3 (MAP1LC3A, MAP1LC3B or MAP1LC3C). Acts by interacting with ATG16L1, leading to promote a functional complex between LC3 and ATG16L1 and promoting LC3 lipidation and subsequent activation of autophagy. Modulates the O-glycosylation and complex N-glycosylation steps occurring during the Golgi maturation of several proteins such as APP, BACE1, SEAP or PRNP. Inhibits APP transport to the cell surface and further shedding. The polypeptide is Transmembrane protein 59 (TMEM59) (Homo sapiens (Human)).